The following is a 309-amino-acid chain: uncharacterized protein (309 aa).

A compositionally biased stretch (basic residues) spans 1 to 11 (MPGNSRRRGAV). Residues 1 to 69 (MPGNSRRRGA…PVKRTDETET (69 aa)) form a disordered region. Residues Gly-261, Ile-281, and Leu-290 each contribute to the S-adenosyl-L-methionine site.

This sequence belongs to the class IV-like SAM-binding methyltransferase superfamily. RNA methyltransferase TrmH family.

This is an uncharacterized protein from Mycobacterium leprae (strain TN).